Consider the following 105-residue polypeptide: Vacuolar ATPase assembly integral membrane protein VMA21 homolog (105 aa).

Residues 1–26 form a disordered region; it reads MSTKNKKAAGGNGGAPKQTRQQSHDS. The Cytoplasmic portion of the chain corresponds to 1 to 36; sequence MSTKNKKAAGGNGGAPKQTRQQSHDSQDYSSFKTVL. Residues 37-57 form a helical membrane-spanning segment; it reads FYCMLIVFLPVLTFFVLKGFV. Topologically, residues 58 to 68 are lumenal; the sequence is LDQFLDISEVK. Residues 69–89 form a helical membrane-spanning segment; that stretch reads VNIASAVGAVVALHVALGLYI. Over 90 to 105 the chain is Cytoplasmic; the sequence is YRAYFGAPGSKASKTD.

This sequence belongs to the VMA21 family.

It localises to the endoplasmic reticulum membrane. It is found in the endoplasmic reticulum-Golgi intermediate compartment membrane. Its subcellular location is the cytoplasmic vesicle. The protein localises to the COPII-coated vesicle membrane. In terms of biological role, required for the assembly of the V0 complex of the vacuolar ATPase (V-ATPase) in the endoplasmic reticulum. The protein is Vacuolar ATPase assembly integral membrane protein VMA21 homolog of Drosophila yakuba (Fruit fly).